The sequence spans 577 residues: Arginine--tRNA ligase (577 aa).

The 'HIGH' region signature appears at 122–132; the sequence is PNVAKEMHVGH.

It belongs to the class-I aminoacyl-tRNA synthetase family. Monomer.

Its subcellular location is the cytoplasm. The enzyme catalyses tRNA(Arg) + L-arginine + ATP = L-arginyl-tRNA(Arg) + AMP + diphosphate. This chain is Arginine--tRNA ligase, found in Enterobacter sp. (strain 638).